A 380-amino-acid chain; its full sequence is Chaperone protein DnaJ (380 aa).

The region spanning 5 to 70 is the J domain; sequence DFYEVLGVSK…NLRARYDQYG (66 aa). The segment at 135 to 213 adopts a CR-type zinc-finger fold; sequence GVSKEIKVPS…CHGEGRYQKT (79 aa). Residues cysteine 148, cysteine 151, cysteine 165, cysteine 168, cysteine 187, cysteine 190, cysteine 201, and cysteine 204 each coordinate Zn(2+). 4 CXXCXGXG motif repeats span residues 148 to 155, 165 to 172, 187 to 194, and 201 to 208; these read CEVCNGSG, CPTCHGAG, CPHCHGRG, and CRKCHGEG.

This sequence belongs to the DnaJ family. In terms of assembly, homodimer. Zn(2+) serves as cofactor.

The protein resides in the cytoplasm. Functionally, participates actively in the response to hyperosmotic and heat shock by preventing the aggregation of stress-denatured proteins and by disaggregating proteins, also in an autonomous, DnaK-independent fashion. Unfolded proteins bind initially to DnaJ; upon interaction with the DnaJ-bound protein, DnaK hydrolyzes its bound ATP, resulting in the formation of a stable complex. GrpE releases ADP from DnaK; ATP binding to DnaK triggers the release of the substrate protein, thus completing the reaction cycle. Several rounds of ATP-dependent interactions between DnaJ, DnaK and GrpE are required for fully efficient folding. Also involved, together with DnaK and GrpE, in the DNA replication of plasmids through activation of initiation proteins. This is Chaperone protein DnaJ from Aeromonas salmonicida (strain A449).